The sequence spans 110 residues: Nucleoid-associated protein YE3092 (110 aa).

It belongs to the YbaB/EbfC family. As to quaternary structure, homodimer.

The protein resides in the cytoplasm. Its subcellular location is the nucleoid. In terms of biological role, binds to DNA and alters its conformation. May be involved in regulation of gene expression, nucleoid organization and DNA protection. This is Nucleoid-associated protein YE3092 from Yersinia enterocolitica serotype O:8 / biotype 1B (strain NCTC 13174 / 8081).